Reading from the N-terminus, the 155-residue chain is Microsomal glutathione S-transferase 1 (155 aa).

Topologically, residues 3-9 (NLSQLME) are lumenal. Residues 10–33 (NEVFMAFASYTTIVLSKMNFMSTA) form a helical membrane-spanning segment. The Cytoplasmic portion of the chain corresponds to 34-62 (TAFYRLTKKVFANPEDCAGFGKGENAKKY). Arg38 is a glutathione binding site. Residues Lys42, Lys55, and Lys60 each carry the N6-acetyllysine modification. The chain crosses the membrane as a helical span at residues 63-96 (LRTDDRVERVRRAHLNDLENIVPFLGIGLLYSLS). The glutathione site is built by Arg73, Arg74, His76, and Glu81. At 97 to 99 (GPD) the chain is on the lumenal side. A helical transmembrane segment spans residues 100 to 123 (LSTAILHFRLFVRARIYHTIAYLT). Residue Tyr121 participates in glutathione binding. The Cytoplasmic portion of the chain corresponds to 124-128 (PLPQP). The chain crosses the membrane as a helical span at residues 129 to 148 (NRALAFFIGYGVTLSMAYRL). Residues 149–155 (LKSKLYL) lie on the Lumenal side of the membrane.

This sequence belongs to the MAPEG family. In terms of assembly, homotrimer; The trimer binds only one molecule of glutathione.

It localises to the endoplasmic reticulum membrane. The protein localises to the mitochondrion outer membrane. The catalysed reaction is RX + glutathione = an S-substituted glutathione + a halide anion + H(+). Conjugation of reduced glutathione to a wide number of exogenous and endogenous hydrophobic electrophiles. This Bos taurus (Bovine) protein is Microsomal glutathione S-transferase 1 (MGST1).